The chain runs to 203 residues: ATP-dependent Clp protease proteolytic subunit (203 aa).

Serine 107 (nucleophile) is an active-site residue. The active site involves histidine 132.

It belongs to the peptidase S14 family. In terms of assembly, fourteen ClpP subunits assemble into 2 heptameric rings which stack back to back to give a disk-like structure with a central cavity, resembling the structure of eukaryotic proteasomes.

It is found in the cytoplasm. It carries out the reaction Hydrolysis of proteins to small peptides in the presence of ATP and magnesium. alpha-casein is the usual test substrate. In the absence of ATP, only oligopeptides shorter than five residues are hydrolyzed (such as succinyl-Leu-Tyr-|-NHMec, and Leu-Tyr-Leu-|-Tyr-Trp, in which cleavage of the -Tyr-|-Leu- and -Tyr-|-Trp bonds also occurs).. Functionally, cleaves peptides in various proteins in a process that requires ATP hydrolysis. Has a chymotrypsin-like activity. Plays a major role in the degradation of misfolded proteins. The sequence is that of ATP-dependent Clp protease proteolytic subunit from Shewanella pealeana (strain ATCC 700345 / ANG-SQ1).